A 955-amino-acid chain; its full sequence is MAM domain-containing glycosylphosphatidylinositol anchor protein 1 (955 aa).

The N-terminal stretch at 1–18 (MEVTCLLLLALIPFHCRG) is a signal peptide. Ig-like domains follow at residues 24 to 123 (PAQA…KSIR) and 132 to 230 (PMLT…KAIT). N-linked (GlcNAc...) asparagine glycans are attached at residues asparagine 42 and asparagine 90. 2 disulfides stabilise this stretch: cysteine 60–cysteine 108 and cysteine 157–cysteine 214. Asparagine 235, asparagine 247, asparagine 257, asparagine 307, and asparagine 331 each carry an N-linked (GlcNAc...) asparagine glycan. The Ig-like 3 domain maps to 240 to 323 (PALKLSVNET…VGNPAKKTVN (84 aa)). A disulfide bridge connects residues cysteine 262 and cysteine 308. Ig-like domains are found at residues 338 to 432 (PDVI…VEVN), 440 to 532 (PTIS…AQVQ), and 539 to 631 (PEVE…FQVS). Residues cysteine 357 and cysteine 415 are joined by a disulfide bond. Asparagine 432 is a glycosylation site (N-linked (GlcNAc...) asparagine). 2 cysteine pairs are disulfide-bonded: cysteine 463/cysteine 514 and cysteine 560/cysteine 615. The 101-residue stretch at 643–743 (TPNPTRSHKL…SRIIHYTEPI (101 aa)) folds into the Fibronectin type-III domain. Asparagine 655 and asparagine 747 each carry an N-linked (GlcNAc...) asparagine glycan. The region spanning 751 to 918 (NTCHFEDEKI…VTLKKGECPR (168 aa)) is the MAM domain. Polar residues predominate over residues 779-788 (LTQNPKRSPN). A disordered region spans residues 779–798 (LTQNPKRSPNTGPPTDISGT). An N-linked (GlcNAc...) asparagine glycan is attached at asparagine 826. A lipid anchor (GPI-anchor amidated serine) is attached at serine 932. Positions 933-955 (GAPCQSSPQLWGPMAIFLLALQR) are cleaved as a propeptide — removed in mature form.

Interacts heterophilically through its MAM domain with proteins in axon-rich regions and through its Ig-like domains with proteins in differentiating muscle. Interacts (through the Ig-like domains) with NLGN2. As to expression, has been found in brain, heart, skeletal muscle and kidney. Found to be overexpressed in tumor tissues.

It is found in the cell membrane. Required for radial migration of cortical neurons in the superficial layer of the neocortex. Plays a role in the formation or maintenance of inhibitory synapses. May function by inhibiting the activity of NLGN2. The chain is MAM domain-containing glycosylphosphatidylinositol anchor protein 1 (MDGA1) from Homo sapiens (Human).